A 250-amino-acid chain; its full sequence is Precorrin-4 C(11)-methyltransferase (250 aa).

It belongs to the precorrin methyltransferase family.

It catalyses the reaction precorrin-4 + S-adenosyl-L-methionine = precorrin-5 + S-adenosyl-L-homocysteine. It participates in cofactor biosynthesis; adenosylcobalamin biosynthesis; cob(II)yrinate a,c-diamide from precorrin-2 (aerobic route): step 4/10. Its function is as follows. Catalyzes the methylation of C-11 in precorrin-4 to form precorrin-5. The protein is Precorrin-4 C(11)-methyltransferase (cobM) of Pseudomonas aeruginosa (strain ATCC 15692 / DSM 22644 / CIP 104116 / JCM 14847 / LMG 12228 / 1C / PRS 101 / PAO1).